The sequence spans 195 residues: HTH-type transcriptional regulator BetI (195 aa).

The HTH tetR-type domain maps to 8-68; sequence SIRRRQLIDA…ATMRDITSQL (61 aa). The H-T-H motif DNA-binding region spans 31-50; it reads TIAQIARRAGVSTGIISHYF.

It participates in amine and polyamine biosynthesis; betaine biosynthesis via choline pathway [regulation]. Repressor involved in the biosynthesis of the osmoprotectant glycine betaine. It represses transcription of the choline transporter BetT and the genes of BetAB involved in the synthesis of glycine betaine. The sequence is that of HTH-type transcriptional regulator BetI from Escherichia coli (strain UTI89 / UPEC).